The following is a 357-amino-acid chain: DNA replication and repair protein RecF (357 aa).

Residue 30 to 37 (GANGSGKT) coordinates ATP.

Belongs to the RecF family.

It localises to the cytoplasm. In terms of biological role, the RecF protein is involved in DNA metabolism; it is required for DNA replication and normal SOS inducibility. RecF binds preferentially to single-stranded, linear DNA. It also seems to bind ATP. This chain is DNA replication and repair protein RecF, found in Escherichia coli O7:K1 (strain IAI39 / ExPEC).